The following is a 292-amino-acid chain: Elongation factor Ts (292 aa).

An involved in Mg(2+) ion dislocation from EF-Tu region spans residues 81 to 84; the sequence is TDFV.

The protein belongs to the EF-Ts family.

It localises to the cytoplasm. Functionally, associates with the EF-Tu.GDP complex and induces the exchange of GDP to GTP. It remains bound to the aminoacyl-tRNA.EF-Tu.GTP complex up to the GTP hydrolysis stage on the ribosome. This chain is Elongation factor Ts, found in Psychromonas ingrahamii (strain DSM 17664 / CCUG 51855 / 37).